The sequence spans 81 residues: Acylphosphatase (81 aa).

Positions 1–81 (MYIFHGRVQG…VKYNDFQIRY (81 aa)) constitute an Acylphosphatase-like domain. Catalysis depends on residues Arg-14 and Asn-32.

The protein belongs to the acylphosphatase family.

It carries out the reaction an acyl phosphate + H2O = a carboxylate + phosphate + H(+). This chain is Acylphosphatase (acyP), found in Picrophilus torridus (strain ATCC 700027 / DSM 9790 / JCM 10055 / NBRC 100828 / KAW 2/3).